We begin with the raw amino-acid sequence, 128 residues long: Sulfurtransferase TusD (128 aa).

Cysteine 78 acts as the Cysteine persulfide intermediate in catalysis.

This sequence belongs to the DsrE/TusD family. Heterohexamer, formed by a dimer of trimers. The hexameric TusBCD complex contains 2 copies each of TusB, TusC and TusD. The TusBCD complex interacts with TusE.

Its subcellular location is the cytoplasm. Part of a sulfur-relay system required for 2-thiolation of 5-methylaminomethyl-2-thiouridine (mnm(5)s(2)U) at tRNA wobble positions. Accepts sulfur from TusA and transfers it in turn to TusE. This Cronobacter sakazakii (strain ATCC BAA-894) (Enterobacter sakazakii) protein is Sulfurtransferase TusD.